The primary structure comprises 1072 residues: MTSLLGLAVRLLLFQPTLMFWASQVRQKCHNGTYEISVLMMDNSAYKEPLQNLRDAVEEGLDIVRKRLREAELNVTVNATFIYSDGLIHKSGDCRSSTCEGLDLLREITRDRKMGCVLMGPSCTYSTFQMYLDTELNYPMISAGSFGLSCDYKETLTRILPPARKLMYFLVDFWKVNNAPFKTFSWNSSYVYKNGSEPEDCFWYLNALEAGVSYFSEVLSFKDVLRRSEQFQEILMGRNRKSNVIVMCGTPETFYNVKGDLKVADDTVVILVDLFSNHYFEDDTRAPEYMDNVLVLTLPPEKFIANASVSGRFPSERSDFSLAYLEGTLLFGHMLQTFLENGESVTTPKFARAFRNLTFQGLEGPVTLDDSGDIDNIMCLLYVSLDTRKYKVLMAYDTHKNQTIPVATSPNFIWKNHRLPNDVPGLGPQILMIAVFTLTGIVVVLLLIALLVLRKYRRDHELRQKKWSHIPSENIFPLETNETNHVSLKIDDDRRRDTIQRVRQCKYDKKKVILKDLKHCDGNFSEKQKIELNKLLQSDYYNLTKFYGTVKLDTRIFGVVEYCERGSLREVLNDTISYPDGTFMDWEFKISVLNDIAKGMSYLHSSKIEVHGRLKSTNCVVDSRMVVKITDFGCNSILPPKKDLWTAPEHLRQATISQKGDVYSFSIIAQEIILRKETFYTLSCRDQNEKIFRVENSYGTKPFRPDLFLETADEKELEVYLLVKSCWEEDPEKRPDFKKIESTLAKIFGLFHDQKNESYMDTLIRRLQLYSRNLEHLVEERTQLYKAERDRADHLNFMLLPRLVVKSLKEKGIVEPELYEEVTIYFSDIVGFTTICKYSTPMEVVDMLNDIYKSFDQIVDHHDVYKVETIGDAYVVASGLPMRNGNRHAVDISKMALDILSFMGTFELEHLPGLPVWIRIGVHSGPCAAGVVGIKMPRYCLFGDTVNTASRMESTGLPLRIHMSSSTIAILRRTDCQFLYEVRGETYLKGRGTETTYWLTGMKDQEYNLPTPPTVENQQRLQTEFSDMIVSALQKRQASGVKSRRPTRVASYKKGFLEYMQLNNSDHDSTYF.

The signal sequence occupies residues 1 to 22; sequence MTSLLGLAVRLLLFQPTLMFWA. The Extracellular portion of the chain corresponds to 23–429; that stretch reads SQVRQKCHNG…PNDVPGLGPQ (407 aa). N-linked (GlcNAc...) asparagine glycosylation is found at asparagine 31, asparagine 74, asparagine 78, asparagine 187, asparagine 194, asparagine 306, and asparagine 401. Residues 430–453 traverse the membrane as a helical segment; that stretch reads ILMIAVFTLTGIVVVLLLIALLVL. At 454–1072 the chain is on the cytoplasmic side; that stretch reads RKYRRDHELR…NNSDHDSTYF (619 aa). One can recognise a Protein kinase domain in the interval 488-748; it reads LKIDDDRRRD…KIESTLAKIF (261 aa). Residues 823-953 form the Guanylate cyclase domain; that stretch reads TIYFSDIVGF…DTVNTASRME (131 aa).

This sequence belongs to the adenylyl cyclase class-4/guanylyl cyclase family. In terms of assembly, homotrimer. Interacts via its C-terminal region with PDZK2. Interacts with the lectin chaperone VIP36. Glycosylation at Asn-74 and/or Asn-78 is required for interaction with VIP36 while glycosylation at Asn-401 modulates ligand-mediated GC-C activation.

Its subcellular location is the cell membrane. The protein resides in the endoplasmic reticulum membrane. The enzyme catalyses GTP = 3',5'-cyclic GMP + diphosphate. Functionally, guanylyl cyclase that catalyzes synthesis of cyclic GMP (cGMP) from GTP. Receptor for the E.coli heat-stable enterotoxin; E.coli enterotoxin markedly stimulates the accumulation of cGMP in mammalian cells expressing GUCY2C. The protein is Guanylyl cyclase C (Gucy2c) of Rattus norvegicus (Rat).